A 911-amino-acid polypeptide reads, in one-letter code: Facilitated trehalose transporter Tret1 (911 aa).

The interval 1–256 (MSGRDNRGAG…RIGFQQQKAT (256 aa)) is disordered. At 1–446 (MSGRDNRGAG…VYRPTTNPIY (446 aa)) the chain is on the cytoplasmic side. Over residues 8-19 (GAGGGGGGGGGG) the composition is skewed to gly residues. Positions 32-50 (KLKEKLTRAGEELGYHRVE) are enriched in basic and acidic residues. Composition is skewed to low complexity over residues 51 to 64 (SNLS…SLDT), 76 to 129 (AAPQ…QQLR), and 156 to 166 (QQIHVQQQQQQ). Phosphoserine is present on residues S302, S303, and S304. Residues 334-355 (VLQGSSTDSDEEGDDAEHKRLI) are disordered. A phosphoserine mark is found at S374 and S376. Positions 380–402 (FLTSRQNFQQQRSISTDSRKSRR) are disordered. Positions 384-395 (RQNFQQQRSIST) are enriched in polar residues. A helical membrane pass occupies residues 447–467 (IWTQVLAALSVSLGSLVVGFA). At 468 to 494 (SAYTSPALVSMTNTNLTSFVVTPQAAS) the chain is on the extracellular side. An N-linked (GlcNAc...) asparagine glycan is attached at N482. A helical transmembrane segment spans residues 495-515 (WVGGIMPLAGLAGGIAGGPFI). Residues 516 to 527 (EYLGRRNTILAT) lie on the Cytoplasmic side of the membrane. A helical membrane pass occupies residues 528–548 (AVPFIVSWLLIACAVNVIMVL). Residues 549–551 (CGR) lie on the Extracellular side of the membrane. A helical membrane pass occupies residues 552–572 (FLAGFCVGIASLSLPVYLGET). At 573 to 578 (VQPEVR) the chain is on the cytoplasmic side. The helical transmembrane segment at 579 to 599 (GTLGLLPTAFGNIGILLCFVA) threads the bilayer. Over 600–606 (GTYMDWS) the chain is Extracellular. A helical transmembrane segment spans residues 607–627 (MLAFLGASLPVPFLILMFLIP). Residues 628 to 690 (ETPRWYVSRG…ELLKRSNLKP (63 aa)) are Cytoplasmic-facing. A helical membrane pass occupies residues 691 to 711 (LSISLGLMFFQQLSGINAVIF). The Extracellular segment spans residues 712-727 (YTVQIFQDAGSTIDGN). A helical transmembrane segment spans residues 728–748 (VCTIIVGVVNFAATFIATILI). At 749-754 (DRAGRK) the chain is on the cytoplasmic side. The chain crosses the membrane as a helical span at residues 755 to 775 (VLLYVSNVMMVLTLFVLGGFF). Over 776–794 (YCKSSGMDTSNVGWLPLSC) the chain is Extracellular. Residues 795-815 (FVIYILGFSLGFGPIPWLMMG) form a helical membrane-spanning segment. Residues 816 to 821 (EILPAK) lie on the Cytoplasmic side of the membrane. The helical transmembrane segment at 822–842 (IRGSAASVATAFNWSCTFVVT) threads the bilayer. Over 843-855 (KSFQDMIDFMGAH) the chain is Extracellular. A helical transmembrane segment spans residues 856–876 (GAFWMFGAICFIGLFFVIFYV). Over 877-911 (PETQGKTLEDIERKMMGRVRRMSSVANIKPLSFNM) the chain is Cytoplasmic. S899 and S900 each carry phosphoserine.

Belongs to the major facilitator superfamily. Sugar transporter (TC 2.A.1.1) family. Trehalose transporter subfamily.

The protein localises to the cell membrane. Functionally, low-capacity facilitative transporter for trehalose. Does not transport maltose, sucrose or lactose. Mediates the bidirectional transfer of trehalose. Responsible for the transport of trehalose synthesized in the fat body and the incorporation of trehalose into other tissues that require a carbon source, thereby regulating trehalose levels in the hemolymph. The sequence is that of Facilitated trehalose transporter Tret1 from Drosophila virilis (Fruit fly).